Reading from the N-terminus, the 317-residue chain is Ataxin-3 homolog (317 aa).

The Josephin domain maps to 7-178 (INSIFFEHQE…RSDADDLISL (172 aa)). The active-site Nucleophile is C20. H117 functions as the Proton acceptor in the catalytic mechanism. N132 is an active-site residue. 2 UIM domains span residues 219–239 (SQEE…KDGS) and 247–264 (EIDE…QAPG). A disordered region spans residues 254–317 (RKAIELSQAP…KKKEERNDEK (64 aa)). Residues 276–293 (RSRSSTPPGASEPFSNAE) are compositionally biased toward polar residues. The segment covering 294–317 (QQRRDRQKFLERFEKKKEERNDEK) has biased composition (basic and acidic residues). The tract at residues 296–299 (RRDR) is interaction with cdc-48.1 and cdc-48.2.

As to quaternary structure, forms a complex composed of deubiquitinating enzyme atx-3, adapter ubxn-5 and cdc-48.1. Forms a complex composed of deubiquitinating enzyme atx-3, E4 ubiquitin-protein ligase ufd-2 and cdc-48.1. Interacts (via RRDR motif) with cdc-48.1 (via N-terminus) and cdc-48.2 (via N-terminus); the interaction with cdc-48.1 is not required for atx-3 enzymatic activity. Interacts (via C-terminus) with ubxn-5. May interact with ned-8. In terms of tissue distribution, expressed in germline (at protein level). Expressed in spermatheca, pharynx, dorsal and ventral cords, some head neurons, hypodermis, body wall muscles and coelomocytes.

It localises to the cytoplasm. The protein localises to the nucleus. It is found in the nucleolus. It catalyses the reaction Thiol-dependent hydrolysis of ester, thioester, amide, peptide and isopeptide bonds formed by the C-terminal Gly of ubiquitin (a 76-residue protein attached to proteins as an intracellular targeting signal).. Acts as a chain editing deubiquitinating enzyme that binds and cleaves 'Lys-48'-linked polyubiquitin chains, with a preference for chains containing four or more ubiquitin molecules thereby modulating protein degradation by the ubiquitin-proteasome pathway. Probably by regulating the IGF-1-insulin-like pathway, regulates lifespan. Regulates germline DNA double-strand-break repair and apoptosis in response to DNA damage by recruiting E4 ubiquitin-protein ligase ufd-2 to DNA repair foci. Interacts with key regulators of transcription and represses transcription. Acts as a histone-binding protein that regulates transcription. The protein is Ataxin-3 homolog (atx-3) of Caenorhabditis elegans.